The sequence spans 250 residues: Phosphate import ATP-binding protein PstB (250 aa).

The region spanning 4-245 is the ABC transporter domain; the sequence is LTARDLKLSF…PRHELTEKYV (242 aa). Residue 36–43 participates in ATP binding; that stretch reads GPSGSGKS.

This sequence belongs to the ABC transporter superfamily. Phosphate importer (TC 3.A.1.7) family. The complex is composed of two ATP-binding proteins (PstB), two transmembrane proteins (PstC and PstA) and a solute-binding protein (PstS).

Its subcellular location is the cell membrane. The enzyme catalyses phosphate(out) + ATP + H2O = ADP + 2 phosphate(in) + H(+). Part of the ABC transporter complex PstSACB involved in phosphate import. Responsible for energy coupling to the transport system. The sequence is that of Phosphate import ATP-binding protein PstB from Pyrobaculum aerophilum (strain ATCC 51768 / DSM 7523 / JCM 9630 / CIP 104966 / NBRC 100827 / IM2).